The following is a 198-amino-acid chain: Dephospho-CoA kinase (198 aa).

The DPCK domain occupies 4–198; the sequence is RIGLTGGIAS…CGLRADGTTW (195 aa). 12-17 serves as a coordination point for ATP; the sequence is ASGKSS.

The protein belongs to the CoaE family.

The protein localises to the cytoplasm. The enzyme catalyses 3'-dephospho-CoA + ATP = ADP + CoA + H(+). It functions in the pathway cofactor biosynthesis; coenzyme A biosynthesis; CoA from (R)-pantothenate: step 5/5. Catalyzes the phosphorylation of the 3'-hydroxyl group of dephosphocoenzyme A to form coenzyme A. The polypeptide is Dephospho-CoA kinase (Parasynechococcus marenigrum (strain WH8102)).